Reading from the N-terminus, the 344-residue chain is Adenine deaminase (344 aa).

3 residues coordinate Zn(2+): His24, His26, and His204. Residue Glu207 is the Proton donor of the active site. Asp285 is a binding site for Zn(2+). Asp286 is a binding site for substrate.

It belongs to the metallo-dependent hydrolases superfamily. Adenosine and AMP deaminases family. Adenine deaminase type 2 subfamily. Zn(2+) is required as a cofactor.

The enzyme catalyses adenine + H2O + H(+) = hypoxanthine + NH4(+). Catalyzes the hydrolytic deamination of adenine to hypoxanthine. Plays an important role in the purine salvage pathway and in nitrogen catabolism. The polypeptide is Adenine deaminase (Caulobacter vibrioides (strain ATCC 19089 / CIP 103742 / CB 15) (Caulobacter crescentus)).